Consider the following 750-residue polypeptide: Photosystem I P700 chlorophyll a apoprotein A1 (750 aa).

The next 8 helical transmembrane spans lie at Val70–Ala93, Leu156–His179, Leu195–Leu219, Ile291–Tyr309, Trp346–Tyr369, Leu385–Val411, Ala433–His455, and Phe531–Leu549. Residues Cys573 and Cys582 each coordinate [4Fe-4S] cluster. The next 2 membrane-spanning stretches (helical) occupy residues His589–Trp610 and Leu664–Phe686. Position 675 (His675) interacts with chlorophyll a'. Residues Met683 and Tyr691 each coordinate chlorophyll a. Residue Trp692 participates in phylloquinone binding. Residues Ala724–Ala744 traverse the membrane as a helical segment.

This sequence belongs to the PsaA/PsaB family. As to quaternary structure, the PsaA/B heterodimer binds the P700 chlorophyll special pair and subsequent electron acceptors. PSI consists of a core antenna complex that captures photons, and an electron transfer chain that converts photonic excitation into a charge separation. The eukaryotic PSI reaction center is composed of at least 11 subunits. Requires P700 is a chlorophyll a/chlorophyll a' dimer, A0 is one or more chlorophyll a, A1 is one or both phylloquinones and FX is a shared 4Fe-4S iron-sulfur center. as cofactor.

It is found in the plastid. The protein resides in the chloroplast thylakoid membrane. The catalysed reaction is reduced [plastocyanin] + hnu + oxidized [2Fe-2S]-[ferredoxin] = oxidized [plastocyanin] + reduced [2Fe-2S]-[ferredoxin]. PsaA and PsaB bind P700, the primary electron donor of photosystem I (PSI), as well as the electron acceptors A0, A1 and FX. PSI is a plastocyanin-ferredoxin oxidoreductase, converting photonic excitation into a charge separation, which transfers an electron from the donor P700 chlorophyll pair to the spectroscopically characterized acceptors A0, A1, FX, FA and FB in turn. Oxidized P700 is reduced on the lumenal side of the thylakoid membrane by plastocyanin. In Aethionema cordifolium (Lebanon stonecress), this protein is Photosystem I P700 chlorophyll a apoprotein A1.